The primary structure comprises 513 residues: ATP synthase subunit alpha (513 aa).

169–176 (GDRQTGKT) is a binding site for ATP.

The protein belongs to the ATPase alpha/beta chains family. F-type ATPases have 2 components, CF(1) - the catalytic core - and CF(0) - the membrane proton channel. CF(1) has five subunits: alpha(3), beta(3), gamma(1), delta(1), epsilon(1). CF(0) has three main subunits: a(1), b(2) and c(9-12). The alpha and beta chains form an alternating ring which encloses part of the gamma chain. CF(1) is attached to CF(0) by a central stalk formed by the gamma and epsilon chains, while a peripheral stalk is formed by the delta and b chains.

It localises to the cell inner membrane. The enzyme catalyses ATP + H2O + 4 H(+)(in) = ADP + phosphate + 5 H(+)(out). Produces ATP from ADP in the presence of a proton gradient across the membrane. The alpha chain is a regulatory subunit. This is ATP synthase subunit alpha from Bordetella petrii (strain ATCC BAA-461 / DSM 12804 / CCUG 43448).